We begin with the raw amino-acid sequence, 217 residues long: N-(5'-phosphoribosyl)anthranilate isomerase (217 aa).

This sequence belongs to the TrpF family.

The catalysed reaction is N-(5-phospho-beta-D-ribosyl)anthranilate = 1-(2-carboxyphenylamino)-1-deoxy-D-ribulose 5-phosphate. Its pathway is amino-acid biosynthesis; L-tryptophan biosynthesis; L-tryptophan from chorismate: step 3/5. This Synechococcus elongatus (strain ATCC 33912 / PCC 7942 / FACHB-805) (Anacystis nidulans R2) protein is N-(5'-phosphoribosyl)anthranilate isomerase.